Here is a 192-residue protein sequence, read N- to C-terminus: Imidazoleglycerol-phosphate dehydratase (192 aa).

This sequence belongs to the imidazoleglycerol-phosphate dehydratase family.

The protein resides in the cytoplasm. It carries out the reaction D-erythro-1-(imidazol-4-yl)glycerol 3-phosphate = 3-(imidazol-4-yl)-2-oxopropyl phosphate + H2O. It functions in the pathway amino-acid biosynthesis; L-histidine biosynthesis; L-histidine from 5-phospho-alpha-D-ribose 1-diphosphate: step 6/9. This Staphylococcus aureus (strain MRSA252) protein is Imidazoleglycerol-phosphate dehydratase.